The following is a 530-amino-acid chain: MSYLLALDAGTGSVRAVIFDLHGNQISVGQAEWKHLSVENVPGSMEFDLDTNWRLACQCIHQALERAHLNAADIQSVACCSMREGIVLYDRNGDAIWACANVDARASREVAELKEIHDYRFESEVYDVSGQTLALSAMPRLLWLAHHRPDIYRNAATITMISDWLAAKLSGELAVDPSNAGTTGMLDLFSRDWRPALLDMAGLRADILSPVKETGTVLGAVTKAAASQSGLREGTPVVMGGGDVQLGCLGLGVVRAGQTAVLGGTFWQQVVNLPQVRTDPDMNIRVNPHVIPGMAQAESISFFTGLTMRWFRDAFCAEEKLIAERMGMDAYALLEEMANRVPAGSHGVMPIFSDAMHFKQWYHAAPSFINLSIDPEKCNKATLFRALEENAAIVSACNLAQISRFSGVTFESLVFAGGGAKGALWSQILSDVTGLPVRVPEVKEATALGCAIAAGTGAGLYNDMAATGEKLVKWSREFTPNPEHRELYDGMMQKWQAVYADQLGLVDSGLTTSMWQAPGLVRVPSPRPSP.

The protein belongs to the FGGY kinase family.

It localises to the cytoplasm. The catalysed reaction is (S)-4,5-dihydroxypentane-2,3-dione + ATP = (2S)-2-hydroxy-3,4-dioxopentyl phosphate + ADP + H(+). Functionally, catalyzes the phosphorylation of autoinducer-2 (AI-2) to phospho-AI-2, which subsequently inactivates the transcriptional regulator LsrR and leads to the transcription of the lsr operon. Phosphorylates the ring-open form of (S)-4,5-dihydroxypentane-2,3-dione (DPD), which is the precursor to all AI-2 signaling molecules, at the C5 position. The sequence is that of Autoinducer-2 kinase from Enterobacter sp. (strain 638).